The sequence spans 518 residues: Putative cytochrome P450 CYP13A7 (518 aa).

Cys-464 lines the heme pocket.

This sequence belongs to the cytochrome P450 family. The cofactor is heme.

In terms of biological role, cytochromes P450 are a group of heme-thiolate monooxygenases. They oxidize a variety of structurally unrelated compounds, including steroids, fatty acids, and xenobiotics. This is Putative cytochrome P450 CYP13A7 (cyp-13A7) from Caenorhabditis elegans.